The chain runs to 202 residues: Putative zinc finger protein ZK686.5 (202 aa).

The tract at residues 43–63 is disordered; the sequence is RKNVDNTSTRKPYSYKDRKRK. C2H2-type zinc fingers lie at residues 110–133, 138–160, and 169–192; these read TYCELCEQNFSSSKMLLLHRGKVH, IECHLCMKLFSQTIQFNRHMKTH, and VQCELCDRQFKDKQSLRTHWDVSH.

It localises to the nucleus. The sequence is that of Putative zinc finger protein ZK686.5 from Caenorhabditis elegans.